A 115-amino-acid polypeptide reads, in one-letter code: NADH-ubiquinone oxidoreductase chain 3 (115 aa).

3 helical membrane-spanning segments follow: residues 3 to 23 (LMLT…IAFW), 55 to 75 (FFLV…LLPL), and 86 to 106 (TMLT…AYEW).

The protein belongs to the complex I subunit 3 family. In terms of assembly, core subunit of respiratory chain NADH dehydrogenase (Complex I) which is composed of 45 different subunits. Interacts with TMEM186. Interacts with TMEM242.

It localises to the mitochondrion inner membrane. It catalyses the reaction a ubiquinone + NADH + 5 H(+)(in) = a ubiquinol + NAD(+) + 4 H(+)(out). Its function is as follows. Core subunit of the mitochondrial membrane respiratory chain NADH dehydrogenase (Complex I) which catalyzes electron transfer from NADH through the respiratory chain, using ubiquinone as an electron acceptor. Essential for the catalytic activity of complex I. This Ceratotherium simum (White rhinoceros) protein is NADH-ubiquinone oxidoreductase chain 3.